A 957-amino-acid chain; its full sequence is Calsyntenin-3 (957 aa).

An N-terminal signal peptide occupies residues 1-19 (MTPLLFPLLLASLLPSSSC). The Extracellular portion of the chain corresponds to 20-848 (NKANKHKPWI…SHRNSMVPSA (829 aa)). Cadherin domains lie at 29–145 (IEAE…APVF) and 146–246 (VERL…KPSW). N-linked (GlcNAc...) asparagine glycans are attached at residues asparagine 299, asparagine 347, and asparagine 508. A helical transmembrane segment spans residues 849–869 (ATLIIVVCVGFLVLMVVLGLV). The Cytoplasmic segment spans residues 870-957 (RIHSLHRRVS…RIIETPPHRY (88 aa)). Residues 919 to 957 (CVAGAAGGQQDDEDSSDSEAADSPSSDERRIIETPPHRY) are disordered. The span at 928 to 938 (QDDEDSSDSEA) shows a compositional bias: acidic residues. The segment covering 944–957 (SDERRIIETPPHRY) has biased composition (basic and acidic residues).

The protein belongs to the calsyntenin family. As to quaternary structure, interacts (via cadherin domains) with both alpha and beta isoforms of neurexins (NRXN1, NRXN2 and NRXN3). Directly interacts with APBA2. Forms a tripartite complex with APBA2 and APP. Interacts with low affinity with KLC1. Interacts with SLC23A2/SVCT2. In terms of processing, proteolytically processed under normal cellular conditions. A primary zeta-cleavage generates a large extracellular (soluble) N-terminal domain (sAlc) and a short C-terminal transmembrane fragment (CTF1). A secondary cleavage catalyzed by gamma-secretase within the transmembrane domain releases the beta-Alc-beta chain in the extracellular milieu and produces an intracellular fragment (AlcICD). This processing is strongly suppressed in the tripartite complex formed with APBA2 and APP, which seems to prevent the association with gamma-secretase.

It is found in the postsynaptic cell membrane. It localises to the endoplasmic reticulum membrane. The protein resides in the golgi apparatus membrane. Its subcellular location is the cell projection. The protein localises to the dendrite. Postsynaptic adhesion molecule that binds to presynaptic neurexins to mediate both excitatory and inhibitory synapse formation. Promotes synapse development by acting as a cell adhesion molecule at the postsynaptic membrane, which associates with both neurexin-alpha and neurexin-beta proteins at the presynaptic membrane. Regulates the balance between excitatory and inhibitory synapses by inhibiting formation of excitatory parallel-fiber synapses and promoting formation of inhibitory synapses in the same neuron. May also be involved in ascorbate (vitamin C) uptake via its interaction with SLC23A2/SVCT2. Complex formation with APBA2 and APP, stabilizes APP metabolism and enhances APBA2-mediated suppression of beta-APP40 secretion, due to the retardation of intracellular APP maturation. The sequence is that of Calsyntenin-3 (CLSTN3) from Bos taurus (Bovine).